A 1763-amino-acid polypeptide reads, in one-letter code: Genome polyprotein (1763 aa).

The SF3 helicase domain occupies 458 to 614 (DGVITSCNKR…ESHKRARPGT (157 aa)). An ATP-binding site is contributed by 484 to 491 (GPPGCGKT). The acidic stretch occupies residues 981–986 (DDEYDE). At Tyr-984 the chain carries O-(5'-phospho-RNA)-tyrosine. Residue Thr-1040 is modified to Phosphothreonine. The residue at position 1067 (Ser-1067) is a Phosphoserine. In terms of domain architecture, Peptidase C24 spans 1073–1229 (GPGTKFHKNA…KLVVPYVHID (157 aa)). Active-site for 3CLpro activity residues include His-1110, Glu-1131, and Cys-1193. The 126-residue stretch at 1478–1603 (AKVFAVDYSK…MFPIMYASIS (126 aa)) folds into the RdRp catalytic domain.

As to quaternary structure, homodimer. Interacts with NTPase, protein p30 and protease-polymerase p76. In terms of assembly, interacts with capsid protein VP1 and protease-polymerase p76. Interacts with host IEF4e; this interaction plays a role in translation of viral proteins. Homooligomer. Interacts with Vpg, protein p32 and may interact with capsid protein VP1. Specific enzymatic cleavages in vivo yield mature proteins. Pro-Pol is first autocatalytically cleaved, then processes the whole polyprotein. Post-translationally, VPg is uridylylated by the polymerase and is covalently attached to the 5'-end of the polyadenylated genomic and subgenomic RNAs. This uridylylated form acts as a nucleotide-peptide primer for the polymerase.

It localises to the host endoplasmic reticulum membrane. The enzyme catalyses a ribonucleoside 5'-triphosphate + H2O = a ribonucleoside 5'-diphosphate + phosphate + H(+). It catalyses the reaction RNA(n) + a ribonucleoside 5'-triphosphate = RNA(n+1) + diphosphate. The catalysed reaction is Endopeptidase with a preference for cleavage when the P1 position is occupied by Glu-|-Xaa and the P1' position is occupied by Gly-|-Yaa.. In terms of biological role, together with NTPase and NS4, initiates the formation of the replication complex. Induces the proliferation of the host smooth ER membranes forming long tubular structures. These remodeled membranes probably form the viral factories that contain the replication complex. Displays NTPase activity, but no helicase activity. Induces the formation of convoluted membranes derived from the host ER. These remodeled membranes probably form the viral factories that contain the replication complex. Together with NS2 and NS4, initiates the formation of the replication complex. Its function is as follows. Probable key protein responsible for the formation of membrane alterations by the virus. Induces the formation of convoluted membranes derived from the host ER. These remodeled membranes probably form the viral factories that contain the replication complex. Together with NS2 and NTPase, initiates the formation of the replication complex. Functionally, viral genome-linked protein is covalently linked to the 5'-end of the positive-strand, negative-strand genomic RNAs and subgenomic RNA. Acts as a genome-linked replication primer. May recruit ribosome to viral RNA thereby promoting viral proteins translation. Interacts with host translation initiation complex to allow the translation of viral proteins. In terms of biological role, protease-polymerase p76 processes the polyprotein: Pro-Pol is first released by autocleavage, then all other proteins are cleaved. Cleaves host translation initiation factor eIF4G1, eIF4G2 and PABP1 thereby inducing a shutdown of host protein synthesis. This shutdown may not prevent viral mRNA from being translated since viral Vpg replaces the cap. It is also an RNA-directed RNA polymerase which replicates genomic and antigenomic viral RNA by recognizing specific signals. Also transcribes a subgenomic mRNA by initiating RNA synthesis internally on antigenomic RNA. This sgRNA codes for structural proteins. Catalyzes the covalent attachment VPg with viral RNAs. Cleaves host G3BP1 thereby preventing the assembly of host stress granules. The sequence is that of Genome polyprotein from Felidae (cat family).